Consider the following 55-residue polypeptide: Small ribosomal subunit protein eS31 (55 aa).

The Zn(2+) site is built by cysteine 21, cysteine 24, cysteine 39, and cysteine 42. The segment at 21–42 adopts a C4-type zinc-finger fold; sequence CPRCGPGVFLAEHADRFTCGRC.

Belongs to the eukaryotic ribosomal protein eS31 family. Part of the 30S ribosomal subunit. Zn(2+) is required as a cofactor.

The sequence is that of Small ribosomal subunit protein eS31 from Thermoplasma volcanium (strain ATCC 51530 / DSM 4299 / JCM 9571 / NBRC 15438 / GSS1).